Here is a 50-residue protein sequence, read N- to C-terminus: Temporin-SHc (50 aa).

Residues phenylalanine 1 to cysteine 10 form the signal peptide. Positions glutamate 11 to arginine 35 are excised as a propeptide. Phenylalanine amide is present on phenylalanine 48.

In terms of tissue distribution, expressed by the skin glands.

It localises to the secreted. The protein localises to the target cell membrane. Amphipathic alpha-helical antimicrobial peptide with potent activity against some Gram-positive bacteria (MIC=4-&gt;80 uM), potent activity against fungi (MIC=10-20 uM), and no activity against Gram-negative bacteria. Does not display anti-leishmania activity. Does not show hemolytic activity (LC(50)&gt;80 uM). This is Temporin-SHc from Pelophylax saharicus (Sahara frog).